A 70-amino-acid polypeptide reads, in one-letter code: Large ribosomal subunit protein bL31 (70 aa).

4 residues coordinate Zn(2+): cysteine 17, cysteine 19, cysteine 37, and cysteine 40.

This sequence belongs to the bacterial ribosomal protein bL31 family. Type A subfamily. In terms of assembly, part of the 50S ribosomal subunit. Zn(2+) is required as a cofactor.

In terms of biological role, binds the 23S rRNA. The polypeptide is Large ribosomal subunit protein bL31 (Clostridium acetobutylicum (strain ATCC 824 / DSM 792 / JCM 1419 / IAM 19013 / LMG 5710 / NBRC 13948 / NRRL B-527 / VKM B-1787 / 2291 / W)).